The sequence spans 448 residues: MVMAKTLHQEVYHTLSETFDFANNDQRLWWHSTAPMFEKMLQTANYSIDAQYRHLGIYKSHVIPFLGVYPTRSGERWLSILTRYGTPFELSLNCSDSVVRYTYEPINAATGSHLDPFNTFAIWEALKKHIESQPGIDLEWFSYFKQELTLDANESTYLHSQNLVKEQIKTQNKLALDLKGDKFVLKTYIYPELKSVATGKSVQELVFGSVRKLAQKHKSIRPAFEMLEDYVQSRNKFSTTDDSHNTLLSSRLLSCDLISPTKSRVKIYLLERMVSLPAMEDLWTLGGRREDQSTIEGLEMIRELWGLLNMSPGLRAYPEPYLPLGAIPNEQLPSMANYTLHHNDPIPEPQVYFTVFGMNDMEVTNALTTFFMRHEWSDMASKYKACLRESFPHHDYEALNYIHSYISFSYRKNKPYLSVYLHSFETGKWPVFPEGLIAFDACRRDLTC.

L-tryptophan-binding positions include 80 to 81 (IL) and E89. 3 residues coordinate substrate: R100, K186, and Y188. L-tryptophan contacts are provided by Y190 and R251. Residues R264, K266, Y268, Q350, Y352, Y416, and Y420 each coordinate substrate.

It belongs to the tryptophan dimethylallyltransferase family. In terms of assembly, homodimer.

The catalysed reaction is L-tryptophan + dimethylallyl diphosphate = 4-(3-methylbut-2-enyl)-L-tryptophan + diphosphate. Its pathway is alkaloid biosynthesis; ergot alkaloid biosynthesis. Functionally, catalyzes the first step of ergot alkaloid biosynthesis. Ergot alkaloids, which are produced by endophyte fungi, can enhance plant host fitness, but also cause livestock toxicosis to host plants. This is Tryptophan dimethylallyltransferase 1 (dmaW1) from Epichloe coenophiala (Tall fescue endophyte fungus).